The sequence spans 155 residues: SsrA-binding protein (155 aa).

The protein belongs to the SmpB family.

The protein localises to the cytoplasm. Required for rescue of stalled ribosomes mediated by trans-translation. Binds to transfer-messenger RNA (tmRNA), required for stable association of tmRNA with ribosomes. tmRNA and SmpB together mimic tRNA shape, replacing the anticodon stem-loop with SmpB. tmRNA is encoded by the ssrA gene; the 2 termini fold to resemble tRNA(Ala) and it encodes a 'tag peptide', a short internal open reading frame. During trans-translation Ala-aminoacylated tmRNA acts like a tRNA, entering the A-site of stalled ribosomes, displacing the stalled mRNA. The ribosome then switches to translate the ORF on the tmRNA; the nascent peptide is terminated with the 'tag peptide' encoded by the tmRNA and targeted for degradation. The ribosome is freed to recommence translation, which seems to be the essential function of trans-translation. The sequence is that of SsrA-binding protein from Lactococcus lactis subsp. lactis (strain IL1403) (Streptococcus lactis).